Reading from the N-terminus, the 165-residue chain is Nuclear cap-binding protein subunit 2 (165 aa).

Residues Tyr19, Tyr42, 111–115 (RADWD), 122–126 (RQYGR), and 132–133 (QV) each bind mRNA. The RRM domain maps to 39–117 (HTLYVGNLSF…RIIRADWDAG (79 aa)). The interval 144–165 (ARGGYGKLAQQHRPTEAIRNTF) is disordered.

This sequence belongs to the RRM NCBP2 family. As to quaternary structure, component of the nuclear cap-binding complex (CBC), a heterodimer composed of ncbp1/cbp80 and ncbp2/cbp20 that interacts with m7GpppG-capped RNA.

The protein localises to the nucleus. The protein resides in the cytoplasm. Component of the cap-binding complex (CBC), which binds co-transcriptionally to the 5' cap of pre-mRNAs and is involved in various processes such as pre-mRNA splicing, translation regulation, nonsense-mediated mRNA decay, RNA-mediated gene silencing (RNAi) by microRNAs (miRNAs) and mRNA export. The CBC complex is involved in mRNA export from the nucleus, leading to the recruitment of the mRNA export machinery to the 5' end of mRNA and to mRNA export in a 5' to 3' direction through the nuclear pore. The CBC complex is also involved in mediating U snRNA and intronless mRNAs export from the nucleus. The CBC complex is essential for a pioneer round of mRNA translation, before steady state translation when the CBC complex is replaced by cytoplasmic cap-binding protein eIF4E. The pioneer round of mRNA translation mediated by the CBC complex plays a central role in nonsense-mediated mRNA decay (NMD), NMD only taking place in mRNAs bound to the CBC complex, but not on eIF4E-bound mRNAs. The CBC complex enhances NMD in mRNAs containing at least one exon-junction complex (EJC), promoting the interaction between upf1 and upf2. The CBC complex is also involved in 'failsafe' NMD, which is independent of the EJC complex, while it does not participate in Staufen-mediated mRNA decay (SMD). During cell proliferation, the CBC complex is also involved in microRNAs (miRNAs) biogenesis via its interaction with srrt/ars2, thereby being required for miRNA-mediated RNA interference. The CBC complex also acts as a negative regulator of parn, thereby acting as an inhibitor of mRNA deadenylation. In the CBC complex, ncbp2/cbp20 recognizes and binds capped RNAs (m7GpppG-capped RNA) but requires ncbp1/cbp80 to stabilize the movement of its N-terminal loop and lock the CBC into a high affinity cap-binding state with the cap structure. The conventional cap-binding complex with NCBP2 binds both small nuclear RNA (snRNA) and messenger (mRNA) and is involved in their export from the nucleus. This Siniperca chuatsi (Mandarin fish) protein is Nuclear cap-binding protein subunit 2 (ncbp2).